We begin with the raw amino-acid sequence, 541 residues long: Chaperonin GroEL 2 (541 aa).

ATP contacts are provided by residues 29-32 (TLGP), 86-90 (DGTTT), Gly-413, 476-478 (NAA), and Asp-492.

Belongs to the chaperonin (HSP60) family. Forms a cylinder of 14 subunits composed of two heptameric rings stacked back-to-back. Interacts with the co-chaperonin GroES.

Its subcellular location is the secreted. The protein resides in the capsule. It is found in the cell surface. The protein localises to the cell wall. The enzyme catalyses ATP + H2O + a folded polypeptide = ADP + phosphate + an unfolded polypeptide.. In terms of biological role, together with its co-chaperonin GroES, plays an essential role in assisting protein folding. The GroEL-GroES system forms a nano-cage that allows encapsulation of the non-native substrate proteins and provides a physical environment optimized to promote and accelerate protein folding. The sequence is that of Chaperonin GroEL 2 from Mycobacterium leprae (strain TN).